A 497-amino-acid chain; its full sequence is Argininosuccinate lyase (497 aa).

It belongs to the lyase 1 family. Argininosuccinate lyase subfamily.

It localises to the cytoplasm. The catalysed reaction is 2-(N(omega)-L-arginino)succinate = fumarate + L-arginine. It functions in the pathway amino-acid biosynthesis; L-arginine biosynthesis; L-arginine from L-ornithine and carbamoyl phosphate: step 3/3. The sequence is that of Argininosuccinate lyase from Clavibacter michiganensis subsp. michiganensis (strain NCPPB 382).